The primary structure comprises 765 residues: Dipeptidyl peptidase 4 (765 aa).

Topologically, residues 1–6 are cytoplasmic; the sequence is MKTPWK. The chain crosses the membrane as a helical; Signal-anchor for type II membrane protein span at residues 7–29; that stretch reads VLLGLLGLAALITIITVPVVLLN. Over 30–765 the chain is Extracellular; sequence KGNDAAADSR…HFIKQCFSLP (736 aa). N-linked (GlcNAc...) asparagine glycosylation is found at asparagine 84, asparagine 91, asparagine 149, asparagine 178, asparagine 228, asparagine 280, asparagine 320, asparagine 330, and asparagine 331. Intrachain disulfides connect cysteine 384–cysteine 393, cysteine 443–cysteine 446, and cysteine 453–cysteine 471. An N-linked (GlcNAc...) asparagine glycan is attached at asparagine 519. Serine 629 functions as the Charge relay system in the catalytic mechanism. Cysteine 648 and cysteine 761 form a disulfide bridge. A glycan (N-linked (GlcNAc...) asparagine) is linked at asparagine 684. Residues aspartate 707 and histidine 739 each act as charge relay system in the active site.

This sequence belongs to the peptidase S9B family. DPPIV subfamily. As to quaternary structure, monomer. Homodimer. Heterodimer with Seprase (FAP). Requires homodimerization for optimal dipeptidyl peptidase activity and T-cell costimulation. Found in a membrane raft complex, at least composed of BCL10, CARD11, DPP4 and IKBKB. Associates with collagen. Interacts with PTPRC; the interaction is enhanced in an interleukin-12-dependent manner in activated lymphocytes. Interacts (extracellular domain) with ADA; does not inhibit its dipeptidyl peptidase activity. Interacts with CAV1 (via the N-terminus); the interaction is direct. Interacts (via cytoplasmic tail) with CARD11 (via PDZ domain); its homodimerization is necessary for interaction with CARD11. Interacts with IGF2R; the interaction is direct. Interacts with GPC3. In terms of processing, the soluble form (Dipeptidyl peptidase 4 soluble form also named SDPP) derives from the membrane form (Dipeptidyl peptidase 4 membrane form also named MDPP) by proteolytic processing. N- and O-Glycosylated. Post-translationally, phosphorylated. Mannose 6-phosphate residues in the carbohydrate moiety are necessary for interaction with IGF2R in activated T-cells. Mannose 6-phosphorylation is induced during T-cell activation.

Its subcellular location is the secreted. It localises to the cell membrane. The protein localises to the apical cell membrane. The protein resides in the cell projection. It is found in the invadopodium membrane. Its subcellular location is the lamellipodium membrane. It localises to the cell junction. The protein localises to the membrane raft. It catalyses the reaction Release of an N-terminal dipeptide, Xaa-Yaa-|-Zaa-, from a polypeptide, preferentially when Yaa is Pro, provided Zaa is neither Pro nor hydroxyproline.. Inhibited by GPC3 and diprotin A. Its function is as follows. Cell surface glycoprotein receptor involved in the costimulatory signal essential for T-cell receptor (TCR)-mediated T-cell activation. Acts as a positive regulator of T-cell coactivation, by binding at least ADA, CAV1, IGF2R, and PTPRC. Its binding to CAV1 and CARD11 induces T-cell proliferation and NF-kappa-B activation in a T-cell receptor/CD3-dependent manner. Its interaction with ADA also regulates lymphocyte-epithelial cell adhesion. In association with FAP is involved in the pericellular proteolysis of the extracellular matrix (ECM), the migration and invasion of endothelial cells into the ECM. May be involved in the promotion of lymphatic endothelial cells adhesion, migration and tube formation. When overexpressed, enhanced cell proliferation, a process inhibited by GPC3. Also acts as a serine exopeptidase with a dipeptidyl peptidase activity that regulates various physiological processes by cleaving peptides in the circulation, including many chemokines, mitogenic growth factors, neuropeptides and peptide hormones. Removes N-terminal dipeptides sequentially from polypeptides having unsubstituted N-termini provided that the penultimate residue is proline. The polypeptide is Dipeptidyl peptidase 4 (DPP4) (Felis catus (Cat)).